The primary structure comprises 674 residues: Methionine--tRNA ligase (674 aa).

The 'HIGH' region motif lies at Pro-11–His-21. Zn(2+) contacts are provided by Cys-142, Cys-145, Cys-155, and Cys-158. The short motif at Lys-330–Ser-334 is the 'KMSKS' region element. ATP is bound at residue Lys-333. The tRNA-binding domain occupies Asp-574–Lys-674.

This sequence belongs to the class-I aminoacyl-tRNA synthetase family. MetG type 1 subfamily. In terms of assembly, homodimer. Zn(2+) is required as a cofactor.

It is found in the cytoplasm. It catalyses the reaction tRNA(Met) + L-methionine + ATP = L-methionyl-tRNA(Met) + AMP + diphosphate. Is required not only for elongation of protein synthesis but also for the initiation of all mRNA translation through initiator tRNA(fMet) aminoacylation. This chain is Methionine--tRNA ligase, found in Francisella tularensis subsp. tularensis (strain WY96-3418).